The chain runs to 270 residues: Glutamate racemase (270 aa).

Residues 7–8 and 39–40 each bind substrate; these read DS and YG. Cys-70 functions as the Proton donor/acceptor in the catalytic mechanism. 71 to 72 provides a ligand contact to substrate; it reads NT. Cys-194 (proton donor/acceptor) is an active-site residue. Substrate is bound at residue 195–196; that stretch reads TH.

This sequence belongs to the aspartate/glutamate racemases family.

The enzyme catalyses L-glutamate = D-glutamate. Its pathway is cell wall biogenesis; peptidoglycan biosynthesis. In terms of biological role, provides the (R)-glutamate required for cell wall biosynthesis. This Jannaschia sp. (strain CCS1) protein is Glutamate racemase.